Reading from the N-terminus, the 153-residue chain is Large ribosomal subunit protein uL15 (153 aa).

The disordered stretch occupies residues 15–42 (ARRIVGRGSSSGRGTTSGRGTKGQQARA). Positions 23 to 35 (SSSGRGTTSGRGT) are enriched in gly residues.

Belongs to the universal ribosomal protein uL15 family. In terms of assembly, part of the 50S ribosomal subunit.

Binds to the 23S rRNA. This chain is Large ribosomal subunit protein uL15, found in Treponema pallidum (strain Nichols).